The sequence spans 471 residues: ATP synthase subunit beta (471 aa).

Position 154–161 (154–161) interacts with ATP; it reads GGAGVGKT.

Belongs to the ATPase alpha/beta chains family. F-type ATPases have 2 components, CF(1) - the catalytic core - and CF(0) - the membrane proton channel. CF(1) has five subunits: alpha(3), beta(3), gamma(1), delta(1), epsilon(1). CF(0) has three main subunits: a(1), b(2) and c(9-12). The alpha and beta chains form an alternating ring which encloses part of the gamma chain. CF(1) is attached to CF(0) by a central stalk formed by the gamma and epsilon chains, while a peripheral stalk is formed by the delta and b chains.

Its subcellular location is the cell membrane. The enzyme catalyses ATP + H2O + 4 H(+)(in) = ADP + phosphate + 5 H(+)(out). Produces ATP from ADP in the presence of a proton gradient across the membrane. The catalytic sites are hosted primarily by the beta subunits. This chain is ATP synthase subunit beta, found in Mesomycoplasma hyopneumoniae (strain J / ATCC 25934 / NCTC 10110) (Mycoplasma hyopneumoniae).